The primary structure comprises 265 residues: Hydroxyethylthiazole kinase (265 aa).

Residue M41 participates in substrate binding. ATP-binding residues include R117 and S163. Residue G190 coordinates substrate.

The protein belongs to the Thz kinase family. The cofactor is Mg(2+).

It carries out the reaction 5-(2-hydroxyethyl)-4-methylthiazole + ATP = 4-methyl-5-(2-phosphooxyethyl)-thiazole + ADP + H(+). It functions in the pathway cofactor biosynthesis; thiamine diphosphate biosynthesis; 4-methyl-5-(2-phosphoethyl)-thiazole from 5-(2-hydroxyethyl)-4-methylthiazole: step 1/1. Its function is as follows. Catalyzes the phosphorylation of the hydroxyl group of 4-methyl-5-beta-hydroxyethylthiazole (THZ). The sequence is that of Hydroxyethylthiazole kinase from Pediococcus pentosaceus (strain ATCC 25745 / CCUG 21536 / LMG 10740 / 183-1w).